Reading from the N-terminus, the 554-residue chain is MQYLPEKDYELPRLDLLTLLFESQLSLTTESTILHAEAADPTNHITKAQARTITKRLAHVFRSEFGIGADGPGKDAVMCISANQVLLPAVFCGIIGAGGVYTAASTALTASEVSKQLRQSRSKVIVACPENRAKARDAARECGIPPDRVLVLESMGHRRLLCQGNFGRNYLQATAELDWERIADIDALENTTICLLYSSGTTGPPKGVMLSHMNLVSEALFTQLVLRDSKEGKPHLNVPYRTVGHLPTAHIAGCLGCFITPAVAGGTVYWMPRFNIDEFIDYCKKYAVTFLSTAPPVYHGIVRSDRVTDQFKTLVRAESGAAPLSLELQEQAEKMLGCTISQRWGMTESTGSVTTMPWGQSDNTGGISPLLPNMRLRLVDERMRDVRSGDEGEILLKGPMITKGYFENPEATAEAFTTDGWYKTGDIGVYKDGKIIMVDRKKELIKYKGLQVSPVEIEGFLLTHPGVADVAVVGARDPEAPGNELPRAYVVIKAGSSVSEAELKEYVKSNLAGHKQLRGGVVFIDEIPKSASGKILRRILRDQARSSAGREAKL.

An AMP-binding site is contributed by 195-206 (LLYSSGTTGPPK).

Belongs to the ATP-dependent AMP-binding enzyme family.

The polypeptide is Putative acyl-coenzyme A synthetase (Emericella nidulans (strain FGSC A4 / ATCC 38163 / CBS 112.46 / NRRL 194 / M139) (Aspergillus nidulans)).